Here is a 396-residue protein sequence, read N- to C-terminus: NADH-quinone oxidoreductase subunit D (396 aa).

This sequence belongs to the complex I 49 kDa subunit family. As to quaternary structure, NDH-1 is composed of 14 different subunits. Subunits NuoB, C, D, E, F, and G constitute the peripheral sector of the complex.

The protein resides in the cell inner membrane. It carries out the reaction a quinone + NADH + 5 H(+)(in) = a quinol + NAD(+) + 4 H(+)(out). Functionally, NDH-1 shuttles electrons from NADH, via FMN and iron-sulfur (Fe-S) centers, to quinones in the respiratory chain. The immediate electron acceptor for the enzyme in this species is believed to be ubiquinone. Couples the redox reaction to proton translocation (for every two electrons transferred, four hydrogen ions are translocated across the cytoplasmic membrane), and thus conserves the redox energy in a proton gradient. The sequence is that of NADH-quinone oxidoreductase subunit D from Bartonella quintana (strain Toulouse) (Rochalimaea quintana).